Consider the following 269-residue polypeptide: Zinc transporter ZupT (269 aa).

The next 8 membrane-spanning stretches (helical) occupy residues 12–32 (AFSI…LVMF), 41–61 (LSFG…TEIF), 75–95 (DHAF…IALI), 126–146 (MMAA…TFFA), 152–172 (AVGM…GISI), 187–207 (VWAC…GYLV), 211–231 (FLSP…MVFL), and 249–269 (TVYG…LFHF). Residues Asn-136 and Glu-139 each coordinate Fe(2+). Glu-139 and His-164 together coordinate Zn(2+). Residues Asn-165, Glu-168, and Glu-197 each contribute to the Fe(2+) site. Glu-168 contacts Zn(2+).

The protein belongs to the ZIP transporter (TC 2.A.5) family. ZupT subfamily.

The protein localises to the cell inner membrane. It carries out the reaction Zn(2+)(in) = Zn(2+)(out). Its function is as follows. Mediates zinc uptake. May also transport other divalent cations. In Neisseria meningitidis serogroup A / serotype 4A (strain DSM 15465 / Z2491), this protein is Zinc transporter ZupT.